A 237-amino-acid chain; its full sequence is Insulin-like growth factor-binding protein 6 (237 aa).

Residues 1–25 form the signal peptide; sequence MTPHRLLPPLLLTLLLAARPGGALA. The 80-residue stretch at 26–105 folds into the IGFBP N-terminal domain; it reads RCPGCGQGVS…LQGRGRCGRA (80 aa). Disulfide bonds link Cys-27–Cys-30, Cys-38–Cys-42, Cys-55–Cys-61, Cys-69–Cys-82, and Cys-76–Cys-102. Positions 101–158 are disordered; sequence RCGRARTPSGENPKESKPQAGTARSQDVNRRDQQRNSGTSTTPSRSNSGGVQDTEMGP. The span at 135-151 shows a compositional bias: polar residues; the sequence is RNSGTSTTPSRSNSGGV. The Thyroglobulin type-1 domain maps to 156–231; that stretch reads MGPCRKHLDS…SEGGDGSSLC (76 aa). Intrachain disulfides connect Cys-159/Cys-186, Cys-197/Cys-208, and Cys-210/Cys-231. The disordered stretch occupies residues 215–237; that stretch reads GQPLPGSSEGGDGSSLCPTGSSG.

In terms of assembly, interacts (via C-terminal domain) with PHB2. In terms of processing, O-glycosylated.

The protein resides in the secreted. Functionally, IGF-binding proteins prolong the half-life of the IGFs and have been shown to either inhibit or stimulate the growth promoting effects of the IGFs on cell culture. They alter the interaction of IGFs with their cell surface receptors. Activates the MAPK signaling pathway and induces cell migration. This Bos taurus (Bovine) protein is Insulin-like growth factor-binding protein 6 (IGFBP6).